A 247-amino-acid chain; its full sequence is 14-3-3 protein zeta (247 aa).

Belongs to the 14-3-3 family. In terms of assembly, homodimer.

The protein localises to the cytoplasm. Functionally, adapter protein implicated in the regulation of a large spectrum of both general and specialized signaling pathways. Binds to a large number of partners, usually by recognition of a phosphoserine or phosphothreonine motif. Binding generally results in the modulation of the activity of the binding partner. The sequence is that of 14-3-3 protein zeta (14-3-3zeta) from Bombyx mori (Silk moth).